A 261-amino-acid polypeptide reads, in one-letter code: Kallikrein 1-related peptidase b11 (261 aa).

The N-terminal stretch at 1–18 is a signal peptide; that stretch reads MWFLILFLALSLGGIDAA. Residues 19–24 constitute a propeptide, activation peptide; that stretch reads PPVQSR. The Peptidase S1 domain maps to 25-258; the sequence is IVGGFNCEKN…FTNWIKDTMA (234 aa). Cystine bridges form between Cys31/Cys173, Cys50/Cys66, Cys152/Cys219, Cys184/Cys198, and Cys209/Cys234. His65 functions as the Charge relay system in the catalytic mechanism. The N-linked (GlcNAc...) asparagine glycan is linked to Asn102. Residue Asp120 is the Charge relay system of the active site. The active-site Charge relay system is Ser213.

This sequence belongs to the peptidase S1 family. Kallikrein subfamily.

It catalyses the reaction Preferential cleavage of Arg-|-Xaa bonds in small molecule substrates. Highly selective action to release kallidin (lysyl-bradykinin) from kininogen involves hydrolysis of Met-|-Xaa or Leu-|-Xaa.. Glandular kallikreins cleave Met-Lys and Arg-Ser bonds in kininogen to release Lys-bradykinin. This Mus musculus (Mouse) protein is Kallikrein 1-related peptidase b11 (Klk1b11).